Consider the following 507-residue polypeptide: Probable D-lactate dehydrogenase, mitochondrial (507 aa).

The transit peptide at 1–52 (MARLLRSATWELFPWRGYCSQKAKGELCRDFVEALKAVVGGSHVSTAAVVRE) directs the protein to the mitochondrion. The residue at position 36 (Lys36) is an N6-acetyllysine. An FAD-binding PCMH-type domain is found at 62-265 (RCEPPDAVVW…TATTLRLHPA (204 aa)). At Lys315 the chain carries N6-acetyllysine. Lys358 bears the N6-acetyllysine; alternate mark. N6-succinyllysine; alternate is present on Lys358. N6-acetyllysine is present on residues Lys445 and Lys472.

It belongs to the FAD-binding oxidoreductase/transferase type 4 family. In terms of assembly, interacts with CSRP3. It depends on FAD as a cofactor. Expressed moderately in heart and liver and at lower levels in skeletal muscle and kidney.

Its subcellular location is the mitochondrion. The catalysed reaction is (R)-lactate + 2 Fe(III)-[cytochrome c] = 2 Fe(II)-[cytochrome c] + pyruvate + 2 H(+). Functionally, involved in D-lactate, but not L-lactate catabolic process. The protein is Probable D-lactate dehydrogenase, mitochondrial of Homo sapiens (Human).